A 529-amino-acid polypeptide reads, in one-letter code: Beta-hexosaminidase subunit alpha (529 aa).

Positions 1 to 22 are cleaved as a signal peptide; the sequence is MASSRLWFSLLLAAALAGRATA. Residues 23–88 constitute a propeptide that is removed on maturation; it reads LWPWPQNIQT…PRPYLTGKRH (66 aa). C58 and C104 are disulfide-bonded. N-linked (GlcNAc...) asparagine glycans are attached at residues N115, N157, and N295. A disulfide bond links C277 and C328. E323 acts as the Proton donor in catalysis. The tract at residues 423–424 is critical for hydrolysis GM2 gangliosides; sequence NR. The cysteines at positions 505 and 522 are disulfide-linked.

This sequence belongs to the glycosyl hydrolase 20 family. As to quaternary structure, there are 3 beta-hexosaminidase isozymes: isozyme A (hexosaminidase A) is a heterodimer composed of one subunit alpha and one subunit beta (chain A and B); isozyme B (hexosaminidase B) is a homodimer of two beta subunits (two chains A and B); isozyme S (hexosaminidase S) is a homodimer of two alpha subunits. The composition of the dimer (isozyme A versus isozyme S) has a significant effect on the substrate specificity of the alpha subunit active site.

The protein localises to the lysosome. The catalysed reaction is Hydrolysis of terminal non-reducing N-acetyl-D-hexosamine residues in N-acetyl-beta-D-hexosaminides.. It carries out the reaction N-acetyl-beta-D-galactosaminyl-(1-&gt;4)-beta-D-3-sulfogalactosyl-(1-&gt;4)-beta-D-glucosyl-(1&lt;-&gt;1')-ceramide + H2O = a beta-D-3-sulfogalactosyl-(1-&gt;4)-beta-D-glucosyl-(1&lt;-&gt;1')-ceramide + N-acetyl-beta-D-galactosamine. It catalyses the reaction a ganglioside GM2 (d18:1(4E)) + H2O = a ganglioside GM3 (d18:1(4E)) + N-acetyl-beta-D-galactosamine. The enzyme catalyses a ganglioside GM2 + H2O = a ganglioside GM3 + N-acetyl-beta-D-galactosamine. The catalysed reaction is beta-D-GalNAc-(1-&gt;4)-alpha-L-IdoA-(1-&gt;3)-beta-D-GalNAc-4-sulfate-(1-&gt;4)-alpha-L-IdoA-(1-&gt;3)-D-GalNAc-4-sulfate + H2O = alpha-L-IdoA-(1-&gt;3)-beta-D-GalNAc-4-sulfate-(1-&gt;4)-alpha-L-IdoA-(1-&gt;3)-D-GalNAc-4-sulfate + N-acetyl-D-galactosamine. It carries out the reaction N-acetyl-beta-D-6-sulfogalactosaminyl-(1-&gt;4)-alpha-L-iduronyl-(1-&gt;3)-N-acetyl-D-6-sulfogalactosamine + H2O = alpha-L-iduronyl-(1-&gt;3)-N-acetyl-D-6-sulfogalactosamine + N-acetyl-D-6-sulfogalactosamine. Addition of GM2A stimulates the hydrolysis of sulfated glycosphingolipid SM2 and the ganglioside GM2. Functionally, hydrolyzes the non-reducing end N-acetyl-D-hexosamine and/or sulfated N-acetyl-D-hexosamine of glycoconjugates, such as the oligosaccharide moieties from proteins and neutral glycolipids, or from certain mucopolysaccharides. The isozyme S is as active as the isozyme A on the anionic bis-sulfated glycans, the chondroitin-6-sulfate trisaccharide (C6S-3), and the dermatan sulfate pentasaccharide, and the sulfated glycosphingolipid SM2. The isozyme B does not hydrolyze each of these substrates, however hydrolyzes efficiently neutral oligosaccharide. Only the isozyme A is responsible for the degradation of GM2 gangliosides in the presence of GM2A. In Pongo abelii (Sumatran orangutan), this protein is Beta-hexosaminidase subunit alpha.